Here is a 104-residue protein sequence, read N- to C-terminus: Large ribosomal subunit protein uL24 (104 aa).

The protein belongs to the universal ribosomal protein uL24 family. In terms of assembly, part of the 50S ribosomal subunit.

In terms of biological role, one of two assembly initiator proteins, it binds directly to the 5'-end of the 23S rRNA, where it nucleates assembly of the 50S subunit. One of the proteins that surrounds the polypeptide exit tunnel on the outside of the subunit. This is Large ribosomal subunit protein uL24 from Photobacterium profundum (strain SS9).